A 373-amino-acid polypeptide reads, in one-letter code: Carboxylesterase/phospholipase LipF (373 aa).

Residues 116-118 carry the Involved in the stabilization of the negatively charged intermediate by the formation of the oxyanion hole motif; that stretch reads HGG. Residues serine 186, glutamate 285, and histidine 315 contribute to the active site.

It belongs to the 'GDXG' lipolytic enzyme family.

It catalyses the reaction a carboxylic ester + H2O = an alcohol + a carboxylate + H(+). The catalysed reaction is a 1,2-diacyl-sn-glycero-3-phosphocholine + H2O = phosphocholine + a 1,2-diacyl-sn-glycerol + H(+). A short-chain esterase and phospholipase. This Mycobacterium tuberculosis (strain CDC 1551 / Oshkosh) protein is Carboxylesterase/phospholipase LipF.